The following is a 106-amino-acid chain: Replication restart protein PriB (106 aa).

In terms of domain architecture, SSB spans 4 to 103 (MNRLVLSGTV…LHAEQIELID (100 aa)).

The protein belongs to the PriB family. Homodimer. Interacts with PriA and DnaT. Component of the replication restart primosome. Primosome assembly occurs via a 'hand-off' mechanism. PriA binds to replication forks, subsequently PriB then DnaT bind; DnaT then displaces ssDNA to generate the helicase loading substrate.

In terms of biological role, involved in the restart of stalled replication forks, which reloads the replicative helicase on sites other than the origin of replication; the PriA-PriB pathway is the major replication restart pathway. During primosome assembly it facilitates complex formation between PriA and DnaT on DNA; stabilizes PriA on DNA. Stimulates the DNA unwinding activity of PriA helicase. The protein is Replication restart protein PriB of Pectobacterium atrosepticum (strain SCRI 1043 / ATCC BAA-672) (Erwinia carotovora subsp. atroseptica).